Here is a 243-residue protein sequence, read N- to C-terminus: HTH-type transcriptional regulator MlrA (243 aa).

In terms of domain architecture, HTH merR-type spans L3–S72. The H-T-H motif DNA-binding region spans I6–R25.

Its function is as follows. Transcriptional activator of csgD, which is required for production of the curli (AgF). The chain is HTH-type transcriptional regulator MlrA from Salmonella typhimurium (strain SL1344).